The chain runs to 463 residues: Hydroxyacid-oxoacid transhydrogenase, mitochondrial (463 aa).

This sequence belongs to the iron-containing alcohol dehydrogenase family. Hydroxyacid-oxoacid transhydrogenase subfamily.

The protein resides in the mitochondrion. The enzyme catalyses (S)-3-hydroxybutanoate + 2-oxoglutarate = (R)-2-hydroxyglutarate + acetoacetate. It catalyses the reaction 4-hydroxybutanoate + 2-oxoglutarate = (R)-2-hydroxyglutarate + succinate semialdehyde. In terms of biological role, catalyzes the cofactor-independent reversible oxidation of gamma-hydroxybutyrate (GHB) to succinic semialdehyde (SSA) coupled to reduction of 2-ketoglutarate (2-KG) to D-2-hydroxyglutarate (D-2-HG). L-3-hydroxybutyrate (L-3-OHB) is also a substrate for HOT when using 2-KG as hydrogen acceptor, resulting in the formation of D-2-HG. The protein is Hydroxyacid-oxoacid transhydrogenase, mitochondrial (adhfe1) of Xenopus tropicalis (Western clawed frog).